The chain runs to 83 residues: Mu-conotoxin-like PnMKLT1-014 (83 aa).

Residues 1–22 (MNLTCMMIVAVLFLTAWTFVMA) form the signal peptide. Residues 23-50 (DDSNNGLANLFSKSRYEMEDPEPSKLEK) constitute a propeptide that is removed on maturation. 3 cysteine pairs are disulfide-bonded: C54/C72, C61/C77, and C71/C82.

It belongs to the conotoxin O1 superfamily. In terms of tissue distribution, expressed by the venom duct.

The protein resides in the secreted. In terms of biological role, mu-conotoxins block voltage-gated sodium channels (Nav). This chain is Mu-conotoxin-like PnMKLT1-014, found in Conus pennaceus (Feathered cone).